Reading from the N-terminus, the 218-residue chain is uncharacterized protein (218 aa).

Belongs to the glycosyltransferase 2 family.

This is an uncharacterized protein from Mycobacterium bovis (strain ATCC BAA-935 / AF2122/97).